Consider the following 416-residue polypeptide: Enterobactin exporter EntS (416 aa).

At 1-21 the chain is on the cytoplasmic side; sequence MNKQSWLLNLSLLKTHPAFRA. A helical transmembrane segment spans residues 22–42; the sequence is VFLARFISIVSLGLLGVAVPV. Residues 43 to 55 are Periplasmic-facing; it reads QIQMMTHSTWQVG. Residues 56 to 76 form a helical membrane-spanning segment; that stretch reads LSVTLTGGAMFVGLMVGGVLA. Residues 77–83 lie on the Cytoplasmic side of the membrane; sequence DRYERKK. Residues 84-104 traverse the membrane as a helical segment; it reads VILLARGTCGIGFIGLCLNAL. Residues 105–109 are Periplasmic-facing; it reads LPEPS. A helical membrane pass occupies residues 110–130; sequence LLAIYLLGLWDGFFASLGVTA. Residues 131–156 are Cytoplasmic-facing; the sequence is LLAATPALVGRENLMQAGAITMLTVR. A helical membrane pass occupies residues 157-177; that stretch reads LGSVISPMIGGLLLATGGVAW. Residue N178 is a topological domain, periplasmic. A helical transmembrane segment spans residues 179–199; the sequence is YGLAAAGTFITLLPLLSLPAL. Over 200–218 the chain is Cytoplasmic; the sequence is PPPPQPREHPLKSLLAGFR. A helical transmembrane segment spans residues 219-239; it reads FLLASPLVGGIALLGGLLTMA. The Periplasmic portion of the chain corresponds to 240–256; it reads SAVRVLYPALADNWQMS. A helical transmembrane segment spans residues 257–277; sequence AAQIGFLYAAIPLGAAIGALT. Residues 278 to 287 lie on the Cytoplasmic side of the membrane; that stretch reads SGKLAHSVRP. The helical transmembrane segment at 288-307 threads the bilayer; it reads GLLMLLSTLGAFLAIGLFGL. Topologically, residues 308–313 are periplasmic; it reads MPMWIL. Residues 314–336 form a helical membrane-spanning segment; sequence GVVCLALFGWLSAVSSLLQYTML. At 337-356 the chain is on the cytoplasmic side; the sequence is QTQTPEAMLGRINGLWTAQN. Residues 357-377 traverse the membrane as a helical segment; that stretch reads VTGDAIGAALLGGLGAMMTPV. Residue A378 is a topological domain, periplasmic. Residues 379–399 form a helical membrane-spanning segment; sequence SASASGFGLLIIGVLLLLVLV. The Cytoplasmic segment spans residues 400–416; it reads ELRRFRQTPPQVTASDS.

The protein belongs to the major facilitator superfamily. EntS (TC 2.A.1.38) family.

It is found in the cell inner membrane. Its function is as follows. Component of an export pathway for enterobactin. The polypeptide is Enterobactin exporter EntS (Escherichia coli O6:H1 (strain CFT073 / ATCC 700928 / UPEC)).